We begin with the raw amino-acid sequence, 577 residues long: Copine-8 (577 aa).

2 C2 domains span residues 19-146 (TSAT…RLEK) and 155-278 (KCGT…FNVY). Ca(2+)-binding residues include Asp52, Asp58, Asp112, Asp114, Ser117, Lys122, Asp124, Asp186, Asp192, Asp248, Asp250, and Asp256. Ser273 bears the Phosphoserine mark. The VWFA domain occupies 322-523 (NFTVAIDFTA…VQFVPFRDYI (202 aa)).

The protein belongs to the copine family. It depends on Ca(2+) as a cofactor.

Functionally, probable calcium-dependent phospholipid-binding protein that may play a role in calcium-mediated intracellular processes. This chain is Copine-8, found in Mus musculus (Mouse).